Reading from the N-terminus, the 149-residue chain is SsrA-binding protein (149 aa).

Belongs to the SmpB family.

The protein resides in the cytoplasm. Functionally, required for rescue of stalled ribosomes mediated by trans-translation. Binds to transfer-messenger RNA (tmRNA), required for stable association of tmRNA with ribosomes. tmRNA and SmpB together mimic tRNA shape, replacing the anticodon stem-loop with SmpB. tmRNA is encoded by the ssrA gene; the 2 termini fold to resemble tRNA(Ala) and it encodes a 'tag peptide', a short internal open reading frame. During trans-translation Ala-aminoacylated tmRNA acts like a tRNA, entering the A-site of stalled ribosomes, displacing the stalled mRNA. The ribosome then switches to translate the ORF on the tmRNA; the nascent peptide is terminated with the 'tag peptide' encoded by the tmRNA and targeted for degradation. The ribosome is freed to recommence translation, which seems to be the essential function of trans-translation. The protein is SsrA-binding protein of Wolbachia sp. subsp. Brugia malayi (strain TRS).